The following is a 351-amino-acid chain: Uroporphyrinogen decarboxylase (351 aa).

Residues 25 to 29, D74, Y151, S206, and H325 each bind substrate; that span reads RQAGR.

The protein belongs to the uroporphyrinogen decarboxylase family. Homodimer.

It is found in the cytoplasm. It carries out the reaction uroporphyrinogen III + 4 H(+) = coproporphyrinogen III + 4 CO2. Its pathway is porphyrin-containing compound metabolism; protoporphyrin-IX biosynthesis; coproporphyrinogen-III from 5-aminolevulinate: step 4/4. In terms of biological role, catalyzes the decarboxylation of four acetate groups of uroporphyrinogen-III to yield coproporphyrinogen-III. The chain is Uroporphyrinogen decarboxylase from Chlorobium chlorochromatii (strain CaD3).